The chain runs to 297 residues: Phosphatidylglycerol--prolipoprotein diacylglyceryl transferase (297 aa).

3 helical membrane passes run 17 to 37 (LAVR…IVVG), 59 to 79 (MLFY…VLFY), and 97 to 117 (GGMS…LFAW). Residue R142 coordinates a 1,2-diacyl-sn-glycero-3-phospho-(1'-sn-glycerol). Transmembrane regions (helical) follow at residues 230 to 250 (MGAV…TVEF) and 257 to 277 (FLGL…PMIV).

This sequence belongs to the Lgt family.

The protein resides in the cell inner membrane. It carries out the reaction L-cysteinyl-[prolipoprotein] + a 1,2-diacyl-sn-glycero-3-phospho-(1'-sn-glycerol) = an S-1,2-diacyl-sn-glyceryl-L-cysteinyl-[prolipoprotein] + sn-glycerol 1-phosphate + H(+). It functions in the pathway protein modification; lipoprotein biosynthesis (diacylglyceryl transfer). Catalyzes the transfer of the diacylglyceryl group from phosphatidylglycerol to the sulfhydryl group of the N-terminal cysteine of a prolipoprotein, the first step in the formation of mature lipoproteins. This Burkholderia multivorans (strain ATCC 17616 / 249) protein is Phosphatidylglycerol--prolipoprotein diacylglyceryl transferase.